A 271-amino-acid polypeptide reads, in one-letter code: Tryptophan synthase alpha chain (271 aa).

Residues Glu-53 and Asp-64 each act as proton acceptor in the active site.

It belongs to the TrpA family. Tetramer of two alpha and two beta chains.

It catalyses the reaction (1S,2R)-1-C-(indol-3-yl)glycerol 3-phosphate + L-serine = D-glyceraldehyde 3-phosphate + L-tryptophan + H2O. It functions in the pathway amino-acid biosynthesis; L-tryptophan biosynthesis; L-tryptophan from chorismate: step 5/5. In terms of biological role, the alpha subunit is responsible for the aldol cleavage of indoleglycerol phosphate to indole and glyceraldehyde 3-phosphate. The chain is Tryptophan synthase alpha chain from Streptomyces coelicolor (strain ATCC BAA-471 / A3(2) / M145).